The sequence spans 106 residues: Large ribosomal subunit protein uL23 (106 aa).

It belongs to the universal ribosomal protein uL23 family. Part of the 50S ribosomal subunit. Contacts protein L29, and trigger factor when it is bound to the ribosome.

One of the early assembly proteins it binds 23S rRNA. One of the proteins that surrounds the polypeptide exit tunnel on the outside of the ribosome. Forms the main docking site for trigger factor binding to the ribosome. This Neisseria meningitidis serogroup A / serotype 4A (strain DSM 15465 / Z2491) protein is Large ribosomal subunit protein uL23.